Consider the following 310-residue polypeptide: HPr kinase/phosphorylase (310 aa).

Active-site residues include histidine 138 and lysine 159. 153-160 (GASGIGKS) serves as a coordination point for ATP. Serine 160 is a binding site for Mg(2+). Aspartate 177 serves as the catalytic Proton acceptor; for phosphorylation activity. Proton donor; for dephosphorylation activity. Residues 201–210 (IEIRGVGIID) form an important for the catalytic mechanism of both phosphorylation and dephosphorylation region. Glutamate 202 provides a ligand contact to Mg(2+). The active site involves arginine 243. Positions 264–269 (PVKTGR) are important for the catalytic mechanism of dephosphorylation.

It belongs to the HPrK/P family. In terms of assembly, homohexamer. It depends on Mg(2+) as a cofactor.

It catalyses the reaction [HPr protein]-L-serine + ATP = [HPr protein]-O-phospho-L-serine + ADP + H(+). The catalysed reaction is [HPr protein]-O-phospho-L-serine + phosphate + H(+) = [HPr protein]-L-serine + diphosphate. Functionally, catalyzes the ATP- as well as the pyrophosphate-dependent phosphorylation of a specific serine residue in HPr, a phosphocarrier protein of the phosphoenolpyruvate-dependent sugar phosphotransferase system (PTS). HprK/P also catalyzes the pyrophosphate-producing, inorganic phosphate-dependent dephosphorylation (phosphorolysis) of seryl-phosphorylated HPr (P-Ser-HPr). The two antagonistic activities of HprK/P are regulated by several intracellular metabolites, which change their concentration in response to the absence or presence of rapidly metabolisable carbon sources (glucose, fructose, etc.) in the growth medium. Therefore, by controlling the phosphorylation state of HPr, HPrK/P is a sensor enzyme that plays a major role in the regulation of carbon metabolism and sugar transport: it mediates carbon catabolite repression (CCR), and regulates PTS-catalyzed carbohydrate uptake and inducer exclusion. The protein is HPr kinase/phosphorylase of Lactococcus lactis subsp. cremoris (strain SK11).